A 545-amino-acid polypeptide reads, in one-letter code: T-complex protein 1 subunit gamma (545 aa).

Residue Met-1 is modified to N-acetylmethionine. Positions 1 to 24 are disordered; it reads MMGHRPVLVLSQNTKRESGRKVQS. Ser-11 carries the phosphoserine modification. A Glycyl lysine isopeptide (Lys-Gly) (interchain with G-Cter in SUMO2) cross-link involves residue Lys-15. Gly-42 is an ADP binding site. Residue Gly-42 participates in ATP binding. Position 93 (Asp-93) interacts with Mg(2+). Residues Gly-94, Thr-95, Thr-96, Ser-97, Thr-162, and Lys-163 each coordinate ADP. Residues Gly-94, Thr-95, and Thr-96 each contribute to the ATP site. Ser-170 is subject to Phosphoserine. Residue Lys-222 is modified to N6-acetyllysine. 2 positions are modified to phosphoserine: Ser-243 and Ser-244. At Tyr-247 the chain carries Phosphotyrosine. Glycyl lysine isopeptide (Lys-Gly) (interchain with G-Cter in SUMO2) cross-links involve residues Lys-248 and Lys-249. At Ser-252 the chain carries Phosphoserine. A disulfide bond links Cys-366 and Cys-372. Lys-381 is covalently cross-linked (Glycyl lysine isopeptide (Lys-Gly) (interchain with G-Cter in SUMO2)). Gly-411 serves as a coordination point for ADP. Gly-411 contributes to the ATP binding site. Thr-430 and Thr-459 each carry phosphothreonine. Residues Gly-482, Glu-483, Glu-497, and Lys-502 each coordinate ADP. Gly-482 contributes to the ATP binding site. Position 497 (Glu-497) interacts with ATP. The disordered stretch occupies residues 526-545; that stretch reads HKKKGDDQSRQGGAPDAGQE.

It belongs to the TCP-1 chaperonin family. Component of the chaperonin-containing T-complex (TRiC), a hexadecamer composed of two identical back-to-back stacked rings enclosing a protein folding chamber. Each ring is made up of eight different subunits: TCP1/CCT1, CCT2, CCT3, CCT4, CCT5, CCT6A/CCT6, CCT7, CCT8. Interacts with PACRG. Interacts with DNAAF4. Interacts with DLEC1.

Its subcellular location is the cytoplasm. The catalysed reaction is ATP + H2O = ADP + phosphate + H(+). In terms of biological role, component of the chaperonin-containing T-complex (TRiC), a molecular chaperone complex that assists the folding of actin, tubulin and other proteins upon ATP hydrolysis. The TRiC complex mediates the folding of WRAP53/TCAB1, thereby regulating telomere maintenance. As part of the TRiC complex may play a role in the assembly of BBSome, a complex involved in ciliogenesis regulating transports vesicles to the cilia. The polypeptide is T-complex protein 1 subunit gamma (CCT3) (Homo sapiens (Human)).